We begin with the raw amino-acid sequence, 177 residues long: Phosphatidylglycerol/phosphatidylinositol transfer protein (177 aa).

The first 17 residues, 1 to 17, serve as a signal peptide directing secretion; that stretch reads MRLSAAVIALLSTSAAA. The propeptide occupies 18-30; the sequence is FSVYRENSVSAND.

Belongs to the NPC2 family. Monomer.

Its function is as follows. Catalyzes the intermembrane transfer of phosphatidylglycerol and phosphatidylinositol. In Neurospora crassa (strain ATCC 24698 / 74-OR23-1A / CBS 708.71 / DSM 1257 / FGSC 987), this protein is Phosphatidylglycerol/phosphatidylinositol transfer protein (npc-2).